The chain runs to 148 residues: Augurin (148 aa).

The first 31 residues, Met-1–Gly-31, serve as a signal peptide directing secretion. Propeptides lie at residues Asn-32–Arg-70 and Ser-133–Tyr-148.

This sequence belongs to the augurin family. In terms of tissue distribution, expressed in the intermediate lobe of pituitary, glomerular layer of adrenal cortex, choroid plexus and atrioventricular node of the heart. Expressed in the brain with high expression in the choroid plexus and the epithelial lining of the central canal and expression in the gray matter of the spinal cord (at protein level).

Its subcellular location is the secreted. It is found in the cytoplasm. The protein localises to the apical cell membrane. Its function is as follows. Probable hormone that may attenuate cell proliferation and induce senescence of oligodendrocyte and neural precursor cells in the central nervous system. ECRG4-induced senescence is characterized by G1 arrest, RB1 dephosphorylation and accelerated CCND1 and CCND3 proteasomal degradation. The chain is Augurin from Mus musculus (Mouse).